The chain runs to 440 residues: Protein disulfide-isomerase 2-3 (440 aa).

An N-terminal signal peptide occupies residues 1–24; it reads MYKSPLTLLTLLTICFGFFDLSSA. 2 consecutive Thioredoxin domains span residues 25–136 and 154–269; these read LYGS…KQIK and SKEK…ELVE. Active-site nucleophile residues include cysteine 60 and cysteine 63. Cysteines 60 and 63 form a disulfide. Residues 143–163 are disordered; sequence LEGKSKPTGGGSKEKKSEPSA. The N-linked (GlcNAc...) asparagine glycan is linked to asparagine 168. Residues cysteine 192 and cysteine 195 each act as nucleophile in the active site. Cysteine 192 and cysteine 195 are disulfide-bonded. A Prevents secretion from ER motif is present at residues 437 to 440; it reads KDEL.

It belongs to the protein disulfide isomerase family. In terms of tissue distribution, widely expressed.

It localises to the endoplasmic reticulum lumen. It carries out the reaction Catalyzes the rearrangement of -S-S- bonds in proteins.. In terms of biological role, acts as a protein-folding catalyst that interacts with nascent polypeptides to catalyze the formation, isomerization, and reduction or oxidation of disulfide bonds. This is Protein disulfide-isomerase 2-3 (PDIL2-3) from Arabidopsis thaliana (Mouse-ear cress).